The sequence spans 117 residues: Antimicrobial peptide AmAMP1 (117 aa).

The first 25 residues, 1 to 25 (MPSIRVLFVLLAVILLFMEVKMTSA), serve as a signal peptide directing secretion. The propeptide occupies 26-73 (ASIVKDVDEDETLENEDGEAMENSWPWHGVEDTSDYSDLSDLANSEKR). Cystine bridges form between C76/C115, C85/C108, and C94/C112.

Belongs to the coral AMP family.

The protein localises to the secreted. In terms of biological role, coral peptide that probably acts as an antimicrobial peptide in the surface mucous layer of planula larvae and likely also in adults. Shows moderate to high activity against some Gram-negative and Gram-positive bacteria (tested on E.coli, B.megaterium, S.aureus, E.aesturaii, B.algicola, Acinetobacter spec.). Does not show antibacterial activity against the coral pathogen V.coralliilyticus. In Acropora millepora (Staghorn coral), this protein is Antimicrobial peptide AmAMP1.